A 145-amino-acid polypeptide reads, in one-letter code: 3-hydroxyacyl-[acyl-carrier-protein] dehydratase FabZ (145 aa).

Residue His49 is part of the active site.

It belongs to the thioester dehydratase family. FabZ subfamily.

Its subcellular location is the cytoplasm. It carries out the reaction a (3R)-hydroxyacyl-[ACP] = a (2E)-enoyl-[ACP] + H2O. Functionally, involved in unsaturated fatty acids biosynthesis. Catalyzes the dehydration of short chain beta-hydroxyacyl-ACPs and long chain saturated and unsaturated beta-hydroxyacyl-ACPs. The protein is 3-hydroxyacyl-[acyl-carrier-protein] dehydratase FabZ of Rickettsia peacockii (strain Rustic).